Reading from the N-terminus, the 625-residue chain is Adenine deaminase 2 (625 aa).

Belongs to the metallo-dependent hydrolases superfamily. Adenine deaminase family. The cofactor is Mn(2+).

It catalyses the reaction adenine + H2O + H(+) = hypoxanthine + NH4(+). This chain is Adenine deaminase 2, found in Bradyrhizobium diazoefficiens (strain JCM 10833 / BCRC 13528 / IAM 13628 / NBRC 14792 / USDA 110).